The following is a 326-amino-acid chain: MSSSSSVPAYLGDEDLTQETRALISSLPKEKGWLVSEIYEFQGLWHTQAILQGILICQKRFEAKDSDIILVTNPKSGTTWLKALVFALLNRHKFPVSSSGNHPLLVTNPHLLVPFLEGVYYESPDFDFSSLPSPRLMNTHISHLSLPESVKSSSCKIVYCCRNPKDMFVSLWHFGKKLAPEETADYPIEKAVEAFCEGKFIGGPFWDHILEYWYASRENPNKVLFVTYEELKKQTEVEMKRIAEFLECGFIEEEEVREIVKLCSFESLSNLEVNKEGKLPNGIETKTFFRKGEIGGWRDTLSESLAEEIDRTIEEKFKGSGLKFSS.

75–80 (KSGTTW) is a binding site for 3'-phosphoadenylyl sulfate. H140 (proton acceptor) is an active-site residue. 3'-phosphoadenylyl sulfate is bound by residues R162, S170, Y228, and 290 to 292 (RKG).

Belongs to the sulfotransferase 1 family. As to quaternary structure, dimer. Expressed in the aerial parts of seedlings, in roots, leaves and flowers. Not detected in stems and siliques.

The protein localises to the cytoplasm. Sulfotransferase that utilizes 3'-phospho-5'-adenylyl sulfate (PAPS) as sulfonate donor to catalyze the stereospecific sulfate conjugation of 24-epibrassinosteroids. Preferred substrates are 24-epicathasterone and 6-deoxo-24-epicathasterone. Low activity with 22-deoxy-24-epiteasterone. No activity with 24-epimers catasterone and brassinolide. Sulfonates salicylic acid. May be involved in detoxification. Enhances plant response to pathogen infection and contributes to long distance signaling in systemic acquired resistance (SAR). The sequence is that of Cytosolic sulfotransferase 12 (SOT12) from Arabidopsis thaliana (Mouse-ear cress).